Reading from the N-terminus, the 48-residue chain is Phospholipase A2 TI-Nh (48 aa).

The active site involves His25. Position 26 (Asp26) interacts with Ca(2+).

The protein belongs to the phospholipase A2 family. Group I subfamily. D49 sub-subfamily. In terms of assembly, monomer. Ca(2+) serves as cofactor. As to expression, expressed by the venom gland.

The protein localises to the secreted. It catalyses the reaction a 1,2-diacyl-sn-glycero-3-phosphocholine + H2O = a 1-acyl-sn-glycero-3-phosphocholine + a fatty acid + H(+). In terms of biological role, phospholipase A2 with weak enzymatic activity, which partially inhibits thrombin enzymatic activity (Ki=73 nM), completely inhibits thrombin-induced platelet aggregation and retards fibrin clot formation (IC(50)=0.2 nM). May exert this anticoagulant effect through a non-enzymatic mechanism. This Naja haje haje (Egyptian cobra) protein is Phospholipase A2 TI-Nh.